Here is a 450-residue protein sequence, read N- to C-terminus: UDP-N-acetylmuramoylalanine--D-glutamate ligase (450 aa).

Position 119 to 125 (Gly119 to Thr125) interacts with ATP.

The protein belongs to the MurCDEF family.

It localises to the cytoplasm. The enzyme catalyses UDP-N-acetyl-alpha-D-muramoyl-L-alanine + D-glutamate + ATP = UDP-N-acetyl-alpha-D-muramoyl-L-alanyl-D-glutamate + ADP + phosphate + H(+). It participates in cell wall biogenesis; peptidoglycan biosynthesis. Functionally, cell wall formation. Catalyzes the addition of glutamate to the nucleotide precursor UDP-N-acetylmuramoyl-L-alanine (UMA). The polypeptide is UDP-N-acetylmuramoylalanine--D-glutamate ligase (Streptococcus sanguinis (strain SK36)).